We begin with the raw amino-acid sequence, 407 residues long: Na(+)-translocating NADH-quinone reductase subunit F (407 aa).

Residues 3–23 form a helical membrane-spanning segment; it reads IILGVVMFTLIVLALVLVILF. The 2Fe-2S ferredoxin-type domain maps to 32 to 126; that stretch reads GDITISINGD…DMDIELPEEI (95 aa). Residues Cys69, Cys75, Cys78, and Cys110 each coordinate [2Fe-2S] cluster. The region spanning 129–269 is the FAD-binding FR-type domain; that stretch reads VKKWECTVIS…SGPFGEFFAK (141 aa). A catalytic region spans residues 272–389; it reads DAEMVFIGGG…PMMNAAVIGM (118 aa).

The protein belongs to the NqrF family. In terms of assembly, composed of six subunits; NqrA, NqrB, NqrC, NqrD, NqrE and NqrF. [2Fe-2S] cluster serves as cofactor. Requires FAD as cofactor.

It is found in the cell inner membrane. It catalyses the reaction a ubiquinone + n Na(+)(in) + NADH + H(+) = a ubiquinol + n Na(+)(out) + NAD(+). Functionally, NQR complex catalyzes the reduction of ubiquinone-1 to ubiquinol by two successive reactions, coupled with the transport of Na(+) ions from the cytoplasm to the periplasm. The first step is catalyzed by NqrF, which accepts electrons from NADH and reduces ubiquinone-1 to ubisemiquinone by a one-electron transfer pathway. This Vibrio anguillarum (Listonella anguillarum) protein is Na(+)-translocating NADH-quinone reductase subunit F.